A 366-amino-acid chain; its full sequence is Photosynthetic reaction center cytochrome c subunit (366 aa).

Residues 1-22 (MALAVRISTLTVAVTAAALLAG) form the signal peptide. Cys-23 is lipidated: N-palmitoyl cysteine. A lipid anchor (S-diacylglycerol cysteine) is attached at Cys-23. Met-94, Cys-107, Cys-110, His-111, Met-129, His-143, Cys-151, Cys-154, His-155, Met-238, Cys-249, Cys-252, His-253, Cys-309, Cys-312, and His-313 together coordinate heme.

In terms of assembly, component of the photosynthetic reaction center composed of protein subunits L (PufL), M (PufM), H (PuhA) and cytochrome C (PufC). The reaction center interacts with light-harvesting antenna complex LH1. Binds 4 heme groups per subunit.

The protein resides in the cellular chromatophore membrane. The reaction center of purple bacteria contains a tightly bound cytochrome molecule which re-reduces the photo oxidized primary electron donor. The polypeptide is Photosynthetic reaction center cytochrome c subunit (pufC) (Rubrivivax gelatinosus (strain NBRC 100245 / IL144)).